Consider the following 128-residue polypeptide: Large ribosomal subunit protein mL51 (128 aa).

A mitochondrion-targeting transit peptide spans M1–L31.

The protein belongs to the mitochondrion-specific ribosomal protein mL51 family. As to quaternary structure, component of the mitochondrial ribosome large subunit (39S) which comprises a 16S rRNA and about 50 distinct proteins. Interacts with OXA1L.

The protein localises to the mitochondrion. The sequence is that of Large ribosomal subunit protein mL51 (MRPL51) from Bos taurus (Bovine).